Consider the following 298-residue polypeptide: UDP-N-acetylenolpyruvoylglucosamine reductase (298 aa).

The 180-residue stretch at 27–206 (VGGPAQRLYR…QQQIRRLLRQ (180 aa)) folds into the FAD-binding PCMH-type domain. Arg171 is a catalytic residue. Ser220 functions as the Proton donor in the catalytic mechanism. Residue Glu290 is part of the active site.

It belongs to the MurB family. The cofactor is FAD.

It localises to the cytoplasm. It catalyses the reaction UDP-N-acetyl-alpha-D-muramate + NADP(+) = UDP-N-acetyl-3-O-(1-carboxyvinyl)-alpha-D-glucosamine + NADPH + H(+). It functions in the pathway cell wall biogenesis; peptidoglycan biosynthesis. Its function is as follows. Cell wall formation. This chain is UDP-N-acetylenolpyruvoylglucosamine reductase, found in Nitrosococcus oceani (strain ATCC 19707 / BCRC 17464 / JCM 30415 / NCIMB 11848 / C-107).